We begin with the raw amino-acid sequence, 648 residues long: Transcription initiation factor TFIID subunit 5 (648 aa).

Residues 1–13 show a composition bias toward low complexity; that stretch reads MDSENSSSHSISS. The disordered stretch occupies residues 1 to 21; the sequence is MDSENSSSHSISSPQMFQNTH. The 33-residue stretch at 35 to 67 folds into the LisH domain; that stretch reads MNNESLQMIIGYLRRNGLTETEELLTREAGPVL. WD repeat units lie at residues 317 to 358, 392 to 431, 433 to 472, 475 to 514, 517 to 556, and 560 to 599; these read NAPI…KKLR, GHGGPVFSVNFSPDRRLLISSAGDRTVRLWSMETQRNAVI, RTPAVVWQAQFCSRGYYFATASADKTAAMWSTDRMHPLRI, DPYGDVGCIDYHPNCNYIAGGSDDRYVRVWDVCSGTRVRI, GHKASIIAVKFSPCGRYIVSLDAIGNLMIWDLAYQRLVAA, and EQAGTKGSITFSRDGGVFAVSHGNSSIQLYSLDTLIGTVL.

The protein belongs to the WD repeat TAF5 family. In terms of assembly, component of the TFIID basal transcription factor complex, composed of TATA-box-binding protein tbp-1, and a number of TBP-associated factors (TAFs).

The protein resides in the nucleus. The TFIID basal transcription factor complex plays a major role in the initiation of RNA polymerase II (Pol II)-dependent transcription. TFIID recognizes and binds promoters via its subunit tbp-1, a TATA-box-binding protein, and promotes assembly of the pre-initiation complex (PIC). The TFIID complex consists of tbp-1 and TBP-associated factors (TAFs), including taf-5. Essential for early embryonic development, but not required for transcription of some genes; probably acts via activating transcription initiation by RNA Pol II, as part of the TFIID complex. This chain is Transcription initiation factor TFIID subunit 5, found in Caenorhabditis elegans.